Consider the following 396-residue polypeptide: Probable sugar efflux transporter (396 aa).

Helical transmembrane passes span 15–35 (VVTL…PVGL), 50–70 (VGIM…PFML), 81–101 (LICL…AWNF), 103–123 (VLVI…SITA), 136–156 (AQAL…GLPI), 169–189 (TFFA…KLLP), 209–229 (PALM…YTAY), 246–266 (FATV…LVFG), 275–295 (SLVS…LPAA), 301–321 (LAIL…GMQV), 333–353 (VAMA…ALVG), and 364–384 (AIGY…VLIF).

This sequence belongs to the major facilitator superfamily. SotB (TC 2.A.1.2) family.

The protein resides in the cell inner membrane. Functionally, involved in the efflux of sugars. The physiological role may be the reduction of the intracellular concentration of toxic sugars or sugar metabolites. This Salmonella agona (strain SL483) protein is Probable sugar efflux transporter.